The primary structure comprises 732 residues: E3 ubiquitin-protein ligase hel2 (732 aa).

Residues 1–48 form a disordered region; sequence MSPSGPNLNNKEHNRASEKKNSRTHNKKTNRNQSKEKPVSSRSVETPK. Residues 10 to 21 show a composition bias toward basic and acidic residues; it reads NKEHNRASEKKN. Residues 81–121 form an RING-type zinc finger; sequence CFICAEGITYSCVLPCNHRMCHVCALRLRALYKTKECTFCK. The LIM zinc-binding domain maps to 245–315; it reads PKCEFCNTHF…RECLERKFVV (71 aa). Disordered regions lie at residues 345–380, 411–501, and 623–732; these read IIPQ…NETA, DFGF…QHQQ, and HDGP…FHIG. Composition is skewed to polar residues over residues 366 to 380 and 415 to 433; these read SSTP…NETA and TLSN…TRTI. A compositionally biased stretch (low complexity) spans 457–468; the sequence is SSSAPSVPVSAP. At S482 the chain carries Phosphoserine. 2 stretches are compositionally biased toward polar residues: residues 490 to 501 and 629 to 654; these read PMASSEQAQHQQ and SAPS…NTPS. Residues 701–713 show a composition bias toward low complexity; sequence STPNTSSNRNSNT.

Belongs to the ZNF598/HEL2 family.

It is found in the cytoplasm. The catalysed reaction is S-ubiquitinyl-[E2 ubiquitin-conjugating enzyme]-L-cysteine + [acceptor protein]-L-lysine = [E2 ubiquitin-conjugating enzyme]-L-cysteine + N(6)-ubiquitinyl-[acceptor protein]-L-lysine.. It functions in the pathway protein modification; protein ubiquitination. Its function is as follows. E3 ubiquitin-protein ligase that plays a key role in the ribosome quality control (RQC), a pathway that takes place when a ribosome has stalled during translation, leading to degradation of nascent peptide chains. Activated when ribosomes are stalled within an mRNA following translation of prematurely polyadenylated mRNAs. Acts as a ribosome collision sensor: specifically recognizes and binds collided ribosome and ubiquitinates the 40S ribosomal proteins rps20/uS10 and rps3/uS3. Catalyzes 'Lys-63'-linked polyubiquitination of rps20/uS10, promoting recruitment of the RQT (ribosome quality control trigger) complex, which drives the disassembly of stalled ribosomes, followed by degradation of nascent peptides. This chain is E3 ubiquitin-protein ligase hel2, found in Schizosaccharomyces pombe (strain 972 / ATCC 24843) (Fission yeast).